A 305-amino-acid chain; its full sequence is Peroxisome biogenesis factor 2 (305 aa).

Topologically, residues 1–15 (MAAREESTQSANRVL) are peroxisomal matrix. The chain crosses the membrane as a helical span at residues 16–42 (RISQLDALELNKALEQLVWSQFTQCFH). Residues 43 to 48 (GFKPGL) are Cytoplasmic-facing. Residues 49-74 (LARFEPEVKAFLWLFLWRFTIYSKNA) traverse the membrane as a helical segment. Residues 75-98 (TVGQSVLNIQYKNDSSPNPVYQPP) are Peroxisomal matrix-facing. The chain crosses the membrane as a helical span at residues 99 to 125 (SKNQKLLYAVCTIGGRWLEERCYDLFR). At 126 to 133 (NRHLASFG) the chain is on the cytoplasmic side. A helical transmembrane segment spans residues 134–160 (KAKQCMNFVVGLLKLGELMNFLIFLQK). At 161–187 (GKFATLTERLLGIHSVFCKPQSMREVG) the chain is on the peroxisomal matrix side. A helical membrane pass occupies residues 188-211 (FEYMNRELLWHGFAEFLVFLLPLI). At 212–305 (NIQKLKAKLS…GIEMSEVNAL (94 aa)) the chain is on the cytoplasmic side. 8 residues coordinate Zn(2+): Cys-244, Cys-247, Cys-259, His-261, Cys-264, Cys-267, Cys-280, and Cys-283. The RING-type zinc-finger motif lies at 244 to 284 (CALCGEWPTMPHTIGCEHVFCYYCVKSSFLFDMYFTCPKCG).

Belongs to the pex2/pex10/pex12 family. Component of the PEX2-PEX10-PEX12 retrotranslocation channel, composed of PEX2, PEX10 and PEX12. Forms intramolecular and intermolecular disulfide bonds in response to reactive oxygen species (ROS), promoting higher stability.

The protein localises to the peroxisome membrane. It carries out the reaction [E2 ubiquitin-conjugating enzyme]-S-ubiquitinyl-L-cysteine + [acceptor protein]-L-cysteine = [E2 ubiquitin-conjugating enzyme]-L-cysteine + [acceptor protein]-S-ubiquitinyl-L-cysteine.. The catalysed reaction is S-ubiquitinyl-[E2 ubiquitin-conjugating enzyme]-L-cysteine + [acceptor protein]-L-lysine = [E2 ubiquitin-conjugating enzyme]-L-cysteine + N(6)-ubiquitinyl-[acceptor protein]-L-lysine.. The protein operates within protein modification; protein ubiquitination. In terms of biological role, E3 ubiquitin-protein ligase component of a retrotranslocation channel required for peroxisome organization by mediating export of the PEX5 receptor from peroxisomes to the cytosol, thereby promoting PEX5 recycling. The retrotranslocation channel is composed of PEX2, PEX10 and PEX12; each subunit contributing transmembrane segments that coassemble into an open channel that specifically allows the passage of PEX5 through the peroxisomal membrane. PEX2 also regulates peroxisome organization by acting as a E3 ubiquitin-protein ligase. PEX2 ubiquitinates PEX5 during its passage through the retrotranslocation channel: catalyzes monoubiquitination of PEX5 at 'Cys-11', a modification that acts as a signal for PEX5 extraction into the cytosol. Required for pexophagy in response to starvation by mediating ubiquitination of peroxisomal proteins, such as PEX5 and ABCD3/PMP70. Also involved in the response to reactive oxygen species (ROS) by mediating 'Lys-48'-linked polyubiquitination and subsequent degradation of PNPLA2/ATGL, thereby regulating lipolysis. The polypeptide is Peroxisome biogenesis factor 2 (Pex2) (Rattus norvegicus (Rat)).